The primary structure comprises 270 residues: Hydroxyethylthiazole kinase (270 aa).

Met-47 is a substrate binding site. Positions 123 and 169 each coordinate ATP. Residue Gly-196 participates in substrate binding.

The protein belongs to the Thz kinase family. Mg(2+) is required as a cofactor.

It carries out the reaction 5-(2-hydroxyethyl)-4-methylthiazole + ATP = 4-methyl-5-(2-phosphooxyethyl)-thiazole + ADP + H(+). It functions in the pathway cofactor biosynthesis; thiamine diphosphate biosynthesis; 4-methyl-5-(2-phosphoethyl)-thiazole from 5-(2-hydroxyethyl)-4-methylthiazole: step 1/1. Functionally, catalyzes the phosphorylation of the hydroxyl group of 4-methyl-5-beta-hydroxyethylthiazole (THZ). The sequence is that of Hydroxyethylthiazole kinase from Roseiflexus castenholzii (strain DSM 13941 / HLO8).